A 327-amino-acid polypeptide reads, in one-letter code: Ornithine carbamoyltransferase (327 aa).

Residues 56–59 (STRT), Gln-83, Arg-107, and 134–137 (HPTQ) contribute to the carbamoyl phosphate site. Residues Asn-166, Asp-230, and 234–235 (SM) contribute to the L-ornithine site. Carbamoyl phosphate contacts are provided by residues 269 to 270 (CL) and Arg-314.

It belongs to the aspartate/ornithine carbamoyltransferase superfamily. OTCase family.

It localises to the cytoplasm. The catalysed reaction is carbamoyl phosphate + L-ornithine = L-citrulline + phosphate + H(+). The protein operates within amino-acid degradation; L-arginine degradation via ADI pathway; carbamoyl phosphate from L-arginine: step 2/2. Reversibly catalyzes the transfer of the carbamoyl group from carbamoyl phosphate (CP) to the N(epsilon) atom of ornithine (ORN) to produce L-citrulline. The sequence is that of Ornithine carbamoyltransferase from Borreliella burgdorferi (strain ZS7) (Borrelia burgdorferi).